The following is a 148-amino-acid chain: UPF0756 membrane protein YeaL (148 aa).

The next 4 helical transmembrane spans lie at 14–34 (ALGF…LIIV), 51–71 (LTVG…SGTL), 86–106 (LVAI…ITLM), and 121–141 (VLGV…AGLV).

It belongs to the UPF0756 family.

Its subcellular location is the cell membrane. The chain is UPF0756 membrane protein YeaL from Salmonella choleraesuis (strain SC-B67).